A 529-amino-acid polypeptide reads, in one-letter code: MLVLFETSVGYAIFKVLNEKKLQEVDSLWKEFETPEKANKIVKLKHFEKFQDTAEALAAFTALMEGKINKQLKKVLKKIVKEAHEPLAVADAKLGGVIKEKLNLSCIHSPVVNELMRGIRSQMDGLIPGVEPREMAAMCLGLAHSLSRYRLKFSADKVDTMIVQAISLLDDLDKELNNYIMRCREWYGWHFPELGKIISDNLTYCKCLQKVGDRKNYASAKLSELLPEEVEAEVKAAAEISMGTEVSEEDICNILHLCTQVIEISEYRTQLYEYLQNRMMAIAPNVTVMVGELVGARLIAHAGSLLNLAKHAASTVQILGAEKALFRALKSRRDTPKYGLIYHASLVGQTSPKHKGKISRMLAAKTVLAIRYDAFGEDSSSAMGVENRAKLEARLRTLEDRGIRKISGTGKALAKTEKYEHKSEVKTYDPSGDSTLPTCSKKRKIEQVDKEDEITEKKAKKAKIKVKVEEEEEEKVAEEEETSVKKKKKRGKKKHIKEEPLSEEEPCTSTAIASPEKKKKKKKKRENED.

Position 34 is a phosphothreonine (T34). Phosphoserine is present on S109. The sufficient for interaction with NOPCHAP1 stretch occupies residues 155 to 400; that stretch reads ADKVDTMIVQ…LEARLRTLED (246 aa). K157 participates in a covalent cross-link: Glycyl lysine isopeptide (Lys-Gly) (interchain with G-Cter in SUMO2). In terms of domain architecture, Nop spans 282-400; the sequence is IAPNVTVMVG…LEARLRTLED (119 aa). Phosphoserine is present on residues S304 and S351. Glycyl lysine isopeptide (Lys-Gly) (interchain with G-Cter in SUMO2) cross-links involve residues K353, K411, K415, K422, K426, K441, K444, and K465. The interval 409–529 is disordered; the sequence is TGKALAKTEK…KKKKKRENED (121 aa). Residues 414–427 show a composition bias toward basic and acidic residues; it reads AKTEKYEHKSEVKT. A Glycyl lysine isopeptide (Lys-Gly) (interchain with G-Cter in SUMO); alternate cross-link involves residue K467. A Glycyl lysine isopeptide (Lys-Gly) (interchain with G-Cter in SUMO1); alternate cross-link involves residue K467. K467 is covalently cross-linked (Glycyl lysine isopeptide (Lys-Gly) (interchain with G-Cter in SUMO2); alternate). A compositionally biased stretch (acidic residues) spans 469–481; the sequence is EEEEEEKVAEEEE. Phosphoserine is present on S483. K485 participates in a covalent cross-link: Glycyl lysine isopeptide (Lys-Gly) (interchain with G-Cter in SUMO2). Basic residues predominate over residues 485 to 495; sequence KKKKKRGKKKH. A Glycyl lysine isopeptide (Lys-Gly) (interchain with G-Cter in SUMO); alternate cross-link involves residue K497. K497 is covalently cross-linked (Glycyl lysine isopeptide (Lys-Gly) (interchain with G-Cter in SUMO2); alternate). S502 and S514 each carry phosphoserine. The span at 517 to 529 shows a compositional bias: basic residues; it reads KKKKKKKKRENED.

This sequence belongs to the NOP5/NOP56 family. As to quaternary structure, core component of box C/D small nucleolar ribonucleoprotein (snoRNP) particles; the core proteins SNU13, NOP56, NOP58 and FBL or FBLL1 assemble stepwise onto the snoRNA. Interacts with NOLC1/Nopp140. Interacts with NOPCHAP1, NUFIP1, RUVBL1 and RUVBL2; NOPCHAP1 bridges the association of NOP58 with RUVBL1:RUVBL2 and NUFIP1. Interacts with PIH1D1. Part of the small subunit (SSU) processome, composed of more than 70 proteins and the RNA chaperone small nucleolar RNA (snoRNA) U3. Sumoylation is essential for high-affinity binding to snoRNAs. As to expression, ubiquitous.

The protein localises to the nucleus. It is found in the nucleolus. Its subcellular location is the nucleoplasm. Required for the biogenesis of box C/D snoRNAs such as U3, U8 and U14 snoRNAs. Part of the small subunit (SSU) processome, first precursor of the small eukaryotic ribosomal subunit. During the assembly of the SSU processome in the nucleolus, many ribosome biogenesis factors, an RNA chaperone and ribosomal proteins associate with the nascent pre-rRNA and work in concert to generate RNA folding, modifications, rearrangements and cleavage as well as targeted degradation of pre-ribosomal RNA by the RNA exosome. Core component of box C/D small nucleolar ribonucleoprotein (snoRNP) complexes that function in methylation of multiple sites on ribosomal RNAs (rRNAs) and messenger RNAs (mRNAs). The polypeptide is Nucleolar protein 58 (Homo sapiens (Human)).